The sequence spans 223 residues: Deoxyribose-phosphate aldolase (223 aa).

D91 acts as the Proton donor/acceptor in catalysis. K153 (schiff-base intermediate with acetaldehyde) is an active-site residue. K182 functions as the Proton donor/acceptor in the catalytic mechanism.

The protein belongs to the DeoC/FbaB aldolase family. DeoC type 1 subfamily.

It is found in the cytoplasm. The enzyme catalyses 2-deoxy-D-ribose 5-phosphate = D-glyceraldehyde 3-phosphate + acetaldehyde. The protein operates within carbohydrate degradation; 2-deoxy-D-ribose 1-phosphate degradation; D-glyceraldehyde 3-phosphate and acetaldehyde from 2-deoxy-alpha-D-ribose 1-phosphate: step 2/2. In terms of biological role, catalyzes a reversible aldol reaction between acetaldehyde and D-glyceraldehyde 3-phosphate to generate 2-deoxy-D-ribose 5-phosphate. This chain is Deoxyribose-phosphate aldolase, found in Streptococcus agalactiae serotype V (strain ATCC BAA-611 / 2603 V/R).